A 92-amino-acid chain; its full sequence is Large ribosomal subunit protein eL43y (92 aa).

The segment at 39–60 adopts a C4-type zinc-finger fold; it reads CEFCGKYGVKRKAVGIWGCKDC.

The protein belongs to the eukaryotic ribosomal protein eL43 family.

The sequence is that of Large ribosomal subunit protein eL43y (RPL37AC) from Arabidopsis thaliana (Mouse-ear cress).